The chain runs to 137 residues: Large ribosomal subunit protein uL16 (137 aa).

Belongs to the universal ribosomal protein uL16 family. In terms of assembly, part of the 50S ribosomal subunit.

Functionally, binds 23S rRNA and is also seen to make contacts with the A and possibly P site tRNAs. The sequence is that of Large ribosomal subunit protein uL16 from Anaplasma phagocytophilum (strain HZ).